The primary structure comprises 346 residues: Methylthioribose-1-phosphate isomerase (346 aa).

Residues 46-48 (RGA), arginine 89, and glutamine 196 each bind substrate. Aspartate 237 serves as the catalytic Proton donor. 247–248 (NK) is a binding site for substrate.

It belongs to the eIF-2B alpha/beta/delta subunits family. MtnA subfamily.

The enzyme catalyses 5-(methylsulfanyl)-alpha-D-ribose 1-phosphate = 5-(methylsulfanyl)-D-ribulose 1-phosphate. It participates in amino-acid biosynthesis; L-methionine biosynthesis via salvage pathway; L-methionine from S-methyl-5-thio-alpha-D-ribose 1-phosphate: step 1/6. In terms of biological role, catalyzes the interconversion of methylthioribose-1-phosphate (MTR-1-P) into methylthioribulose-1-phosphate (MTRu-1-P). The chain is Methylthioribose-1-phosphate isomerase from Citrifermentans bemidjiense (strain ATCC BAA-1014 / DSM 16622 / JCM 12645 / Bem) (Geobacter bemidjiensis).